The sequence spans 375 residues: 23S rRNA (uracil(747)-C(5))-methyltransferase RlmC (375 aa).

[4Fe-4S] cluster is bound by residues C3, C11, C14, and C87. S-adenosyl-L-methionine contacts are provided by Q212, F241, E262, and N307. Residue C334 is the Nucleophile of the active site.

Belongs to the class I-like SAM-binding methyltransferase superfamily. RNA M5U methyltransferase family. RlmC subfamily.

It catalyses the reaction uridine(747) in 23S rRNA + S-adenosyl-L-methionine = 5-methyluridine(747) in 23S rRNA + S-adenosyl-L-homocysteine + H(+). Its function is as follows. Catalyzes the formation of 5-methyl-uridine at position 747 (m5U747) in 23S rRNA. The chain is 23S rRNA (uracil(747)-C(5))-methyltransferase RlmC from Escherichia coli O139:H28 (strain E24377A / ETEC).